The sequence spans 631 residues: 1-deoxy-D-xylulose-5-phosphate synthase (631 aa).

Residues histidine 87 and 128 to 130 each bind thiamine diphosphate; that span reads GHS. Aspartate 159 provides a ligand contact to Mg(2+). Residues 160 to 161, asparagine 188, phenylalanine 295, and glutamate 377 each bind thiamine diphosphate; that span reads GA. Residue asparagine 188 coordinates Mg(2+).

Belongs to the transketolase family. DXPS subfamily. As to quaternary structure, homodimer. It depends on Mg(2+) as a cofactor. Thiamine diphosphate serves as cofactor.

It catalyses the reaction D-glyceraldehyde 3-phosphate + pyruvate + H(+) = 1-deoxy-D-xylulose 5-phosphate + CO2. The protein operates within metabolic intermediate biosynthesis; 1-deoxy-D-xylulose 5-phosphate biosynthesis; 1-deoxy-D-xylulose 5-phosphate from D-glyceraldehyde 3-phosphate and pyruvate: step 1/1. In terms of biological role, catalyzes the acyloin condensation reaction between C atoms 2 and 3 of pyruvate and glyceraldehyde 3-phosphate to yield 1-deoxy-D-xylulose-5-phosphate (DXP). This Pseudomonas putida (strain W619) protein is 1-deoxy-D-xylulose-5-phosphate synthase.